A 398-amino-acid chain; its full sequence is Cytochrome b (398 aa).

4 helical membrane passes run 33–53, 77–98, 113–133, and 178–198; these read FGSLLGLCLVAQIITGLFLAM, WLIRNLHANGASFFFICVYLHI, WNIGVILLLLVMMTAFVGYVL, and FFAFHFLFPFLIAAFTIIHLL. Positions 83 and 97 each coordinate heme b. The heme b site is built by His182 and His196. His201 lines the a ubiquinone pocket. A run of 4 helical transmembrane segments spans residues 226–246, 288–308, 320–340, and 347–367; these read YKDLLGFAILLIALISLSLFA, LGGVLALLASILILMLVPILH, FTQLLFWLLVADVIILTWIGG, and YVVIGQIASFLYFFLFLFLIP.

This sequence belongs to the cytochrome b family. As to quaternary structure, the cytochrome bc1 complex contains 3 respiratory subunits (MT-CYB, CYC1 and UQCRFS1), 2 core proteins (UQCRC1 and UQCRC2) and probably 6 low-molecular weight proteins. Heme b serves as cofactor.

Its subcellular location is the mitochondrion inner membrane. In terms of biological role, component of the ubiquinol-cytochrome c reductase complex (complex III or cytochrome b-c1 complex) that is part of the mitochondrial respiratory chain. The b-c1 complex mediates electron transfer from ubiquinol to cytochrome c. Contributes to the generation of a proton gradient across the mitochondrial membrane that is then used for ATP synthesis. This is Cytochrome b (mt-cyb) from Channa asiatica (Small snakehead).